Reading from the N-terminus, the 126-residue chain is Small ribosomal subunit protein uS11 (126 aa).

This sequence belongs to the universal ribosomal protein uS11 family. As to quaternary structure, part of the 30S ribosomal subunit. Interacts with proteins S7 and S18. Binds to IF-3.

Its function is as follows. Located on the platform of the 30S subunit, it bridges several disparate RNA helices of the 16S rRNA. Forms part of the Shine-Dalgarno cleft in the 70S ribosome. In Ehrlichia chaffeensis (strain ATCC CRL-10679 / Arkansas), this protein is Small ribosomal subunit protein uS11.